A 587-amino-acid polypeptide reads, in one-letter code: V-type proton ATPase catalytic subunit A (587 aa).

243–250 (GAFGCGKT) contributes to the ATP binding site.

It belongs to the ATPase alpha/beta chains family. As to quaternary structure, V-ATPase is a heteromultimeric enzyme composed of a peripheral catalytic V1 complex (main components: subunits A, B, C, D, E, and F) attached to an integral membrane V0 proton pore complex (main component: the proteolipid protein).

It carries out the reaction ATP + H2O + 4 H(+)(in) = ADP + phosphate + 5 H(+)(out). Functionally, catalytic subunit of the peripheral V1 complex of vacuolar ATPase. V-ATPase vacuolar ATPase is responsible for acidifying a variety of intracellular compartments in eukaryotic cells. The sequence is that of V-type proton ATPase catalytic subunit A from Cyanidium caldarium (Red alga).